Consider the following 345-residue polypeptide: 4-hydroxythreonine-4-phosphate dehydrogenase (345 aa).

Positions 148 and 149 each coordinate substrate. Residues His182, His227, and His282 each coordinate a divalent metal cation. Positions 290, 299, and 308 each coordinate substrate.

It belongs to the PdxA family. Homodimer. Requires Zn(2+) as cofactor. Mg(2+) is required as a cofactor. It depends on Co(2+) as a cofactor.

It localises to the cytoplasm. It carries out the reaction 4-(phosphooxy)-L-threonine + NAD(+) = 3-amino-2-oxopropyl phosphate + CO2 + NADH. It functions in the pathway cofactor biosynthesis; pyridoxine 5'-phosphate biosynthesis; pyridoxine 5'-phosphate from D-erythrose 4-phosphate: step 4/5. In terms of biological role, catalyzes the NAD(P)-dependent oxidation of 4-(phosphooxy)-L-threonine (HTP) into 2-amino-3-oxo-4-(phosphooxy)butyric acid which spontaneously decarboxylates to form 3-amino-2-oxopropyl phosphate (AHAP). In Bradyrhizobium diazoefficiens (strain JCM 10833 / BCRC 13528 / IAM 13628 / NBRC 14792 / USDA 110), this protein is 4-hydroxythreonine-4-phosphate dehydrogenase.